A 262-amino-acid chain; its full sequence is Sepiapterin reductase (262 aa).

M1 is modified (N-acetylmethionine). Residues 15 to 21 (GASRGFG) and 43 to 44 (RS) each bind NADP(+). At S46 the chain carries Phosphoserine. Residue 70–71 (DL) coordinates NADP(+). Substrate-binding positions include 158–159 (SL) and Y171. Residue K175 coordinates NADP(+). S196 is subject to Phosphoserine. A substrate-binding site is contributed by G200. 202–207 (LDTDMQ) is an NADP(+) binding site. S214 is subject to Phosphoserine. Position 258 (D258) interacts with substrate.

Belongs to the sepiapterin reductase family. Homodimer.

The protein localises to the cytoplasm. It catalyses the reaction L-erythro-7,8-dihydrobiopterin + NADP(+) = L-sepiapterin + NADPH + H(+). The catalysed reaction is (6R)-L-erythro-5,6,7,8-tetrahydrobiopterin + 2 NADP(+) = 6-pyruvoyl-5,6,7,8-tetrahydropterin + 2 NADPH + 2 H(+). It carries out the reaction (S)-benzoin + NADP(+) = benzil + NADPH + H(+). In terms of biological role, catalyzes the final one or two reductions in tetra-hydrobiopterin biosynthesis to form 5,6,7,8-tetrahydrobiopterin. The enzyme also catalyzes the reduction of benzil to (S)-benzoin. The chain is Sepiapterin reductase (SPR) from Meriones unguiculatus (Mongolian jird).